The chain runs to 41 residues: Large ribosomal subunit protein bL36 (41 aa).

It belongs to the bacterial ribosomal protein bL36 family.

The sequence is that of Large ribosomal subunit protein bL36 from Rhodopseudomonas palustris (strain BisA53).